The primary structure comprises 181 residues: Protein Ves (181 aa).

The protein belongs to the Ves family.

The protein is Protein Ves of Cronobacter sakazakii (strain ATCC BAA-894) (Enterobacter sakazakii).